The following is a 94-amino-acid chain: Phormicin (94 aa).

Residues 1–23 form the signal peptide; that stretch reads MKFFMVFVVTFCLAVCFVSQSLA. Positions 24–54 are excised as a propeptide; sequence IPADAANDAHFVDGVQALKEIEPELHGRYKR. 3 cysteine pairs are disulfide-bonded: C57–C84, C70–C90, and C74–C92.

The protein belongs to the invertebrate defensin family. Type 1 subfamily.

It is found in the secreted. In terms of biological role, responsible for the anti Gram-positive activity of immune hemolymph of P.terraenovae. The protein is Phormicin of Protophormia terraenovae (Northern blowfly).